Reading from the N-terminus, the 228-residue chain is Phosphoribosylformylglycinamidine synthase subunit PurQ (228 aa).

The Glutamine amidotransferase type-1 domain occupies 3-226; sequence FAVIVFPGSN…IANWRDSYAI (224 aa). C87 functions as the Nucleophile in the catalytic mechanism. Catalysis depends on residues H195 and E197.

Part of the FGAM synthase complex composed of 1 PurL, 1 PurQ and 2 PurS subunits.

The protein resides in the cytoplasm. It carries out the reaction N(2)-formyl-N(1)-(5-phospho-beta-D-ribosyl)glycinamide + L-glutamine + ATP + H2O = 2-formamido-N(1)-(5-O-phospho-beta-D-ribosyl)acetamidine + L-glutamate + ADP + phosphate + H(+). It catalyses the reaction L-glutamine + H2O = L-glutamate + NH4(+). The protein operates within purine metabolism; IMP biosynthesis via de novo pathway; 5-amino-1-(5-phospho-D-ribosyl)imidazole from N(2)-formyl-N(1)-(5-phospho-D-ribosyl)glycinamide: step 1/2. Its function is as follows. Part of the phosphoribosylformylglycinamidine synthase complex involved in the purines biosynthetic pathway. Catalyzes the ATP-dependent conversion of formylglycinamide ribonucleotide (FGAR) and glutamine to yield formylglycinamidine ribonucleotide (FGAM) and glutamate. The FGAM synthase complex is composed of three subunits. PurQ produces an ammonia molecule by converting glutamine to glutamate. PurL transfers the ammonia molecule to FGAR to form FGAM in an ATP-dependent manner. PurS interacts with PurQ and PurL and is thought to assist in the transfer of the ammonia molecule from PurQ to PurL. The polypeptide is Phosphoribosylformylglycinamidine synthase subunit PurQ (Oceanobacillus iheyensis (strain DSM 14371 / CIP 107618 / JCM 11309 / KCTC 3954 / HTE831)).